The following is a 377-amino-acid chain: MLRRASFVEVDTSSLRHNFHAAKNAIPKDAHIMAVVKANAYGVGALKASEVFLQEGAHYLGVATLDEALELRSCFPKTPILILGYSPNSNAQMLIDNNLTAMIFSLEQAGVFSQAALKSQKHLKVHLKIDTGMHRLGLEPNFKSIEMIKKIRALNGLEVEGIFTHLSNANANIKTHAKNQMKIFNAFLEQLLDQKIEFQYRHAYNSAGILSLCNNNENRFLNLYRPGIMLYGFYPSNEMKQSCQTILNNVVSLKAKIVQIKRVKKGEFVGYGKHFYTNEETLIGTLALGYADGLVRDLGNRIQVAINNQLAPLIGKVCMDQCFVKLDGIEAKEGDEVILFGDKSTKANDANEIAMLLNTIPYETISTLSKRLERVYV.

The active-site Proton acceptor; specific for D-alanine is K37. Residue K37 is modified to N6-(pyridoxal phosphate)lysine. A substrate-binding site is contributed by R135. Y271 (proton acceptor; specific for L-alanine) is an active-site residue. M319 is a substrate binding site.

This sequence belongs to the alanine racemase family. It depends on pyridoxal 5'-phosphate as a cofactor.

It carries out the reaction L-alanine = D-alanine. It functions in the pathway amino-acid biosynthesis; D-alanine biosynthesis; D-alanine from L-alanine: step 1/1. In terms of biological role, catalyzes the interconversion of L-alanine and D-alanine. May also act on other amino acids. The polypeptide is Alanine racemase (alr) (Helicobacter acinonychis (strain Sheeba)).